A 510-amino-acid polypeptide reads, in one-letter code: Probable cytosol aminopeptidase (510 aa).

Residues Lys272 and Asp277 each contribute to the Mn(2+) site. Residue Lys284 is part of the active site. Asp296, Asp355, and Glu357 together coordinate Mn(2+). Residue Arg359 is part of the active site.

The protein belongs to the peptidase M17 family. The cofactor is Mn(2+).

It localises to the cytoplasm. It catalyses the reaction Release of an N-terminal amino acid, Xaa-|-Yaa-, in which Xaa is preferably Leu, but may be other amino acids including Pro although not Arg or Lys, and Yaa may be Pro. Amino acid amides and methyl esters are also readily hydrolyzed, but rates on arylamides are exceedingly low.. The enzyme catalyses Release of an N-terminal amino acid, preferentially leucine, but not glutamic or aspartic acids.. Its function is as follows. Presumably involved in the processing and regular turnover of intracellular proteins. Catalyzes the removal of unsubstituted N-terminal amino acids from various peptides. The chain is Probable cytosol aminopeptidase from Synechococcus sp. (strain JA-3-3Ab) (Cyanobacteria bacterium Yellowstone A-Prime).